The primary structure comprises 581 residues: Major facilitator superfamily multidrug transporter NAG4 (581 aa).

Polar residues predominate over residues 1–14 (MSHATDSTLDNASV). The segment at 1 to 43 (MSHATDSTLDNASVDSEKVRDFGDDLQNHPVQPTRSILSKIRS) is disordered. An N-linked (GlcNAc...) asparagine glycan is attached at Asn11. A compositionally biased stretch (basic and acidic residues) spans 15 to 27 (DSEKVRDFGDDLQ). N-linked (GlcNAc...) asparagine glycosylation is present at Asn125. 12 helical membrane passes run 132-152 (WLYT…SAIV), 169-189 (VIIL…PLVF), 199-219 (KPIY…CGAA), 230-250 (LIDG…LADI), 261-281 (AIFS…GGLL), 290-310 (WIYW…IAIV), 365-385 (IVFL…MFFF), 403-423 (GVMF…APFF), 447-467 (LIPM…FAWS), 471-491 (WVSW…FCCL), 510-530 (ALAA…LFTI), and 544-564 (LMAF…FFGA).

The protein belongs to the major facilitator superfamily. DHA1 family. Polyamines/proton antiporter (TC 2.A.1.2.16) subfamily.

The protein resides in the cell membrane. Functionally, MFS transporter involved in N-acetylglucosamine (GlcNAc) uptake. Confers resistance to cycloheximide, 4-nitroquinoline-N-oxide, and 1,10-phenanthroline, and contributes to virulence. This is Major facilitator superfamily multidrug transporter NAG4 from Candida albicans (strain SC5314 / ATCC MYA-2876) (Yeast).